We begin with the raw amino-acid sequence, 117 residues long: UPF0342 protein LBUL_1430 (117 aa).

This sequence belongs to the UPF0342 family.

This is UPF0342 protein LBUL_1430 from Lactobacillus delbrueckii subsp. bulgaricus (strain ATCC BAA-365 / Lb-18).